A 311-amino-acid chain; its full sequence is Putative HTH-type transcriptional regulatory protein PTO0557 (311 aa).

Positions 132-186 (MRRIRELKGYSVGYLSSKLGISRRSISLYESGSSATIDIYLKLEETLGEDLTKDI) constitute an HTH cro/C1-type domain. Positions 143–162 (VGYLSSKLGISRRSISLYES) form a DNA-binding region, H-T-H motif.

This chain is Putative HTH-type transcriptional regulatory protein PTO0557, found in Picrophilus torridus (strain ATCC 700027 / DSM 9790 / JCM 10055 / NBRC 100828 / KAW 2/3).